Here is a 273-residue protein sequence, read N- to C-terminus: Putative pyruvate, phosphate dikinase regulatory protein (273 aa).

Residue 149–156 (GPSRTSKT) participates in ADP binding.

The protein belongs to the pyruvate, phosphate/water dikinase regulatory protein family. PDRP subfamily.

It catalyses the reaction N(tele)-phospho-L-histidyl/L-threonyl-[pyruvate, phosphate dikinase] + ADP = N(tele)-phospho-L-histidyl/O-phospho-L-threonyl-[pyruvate, phosphate dikinase] + AMP + H(+). It carries out the reaction N(tele)-phospho-L-histidyl/O-phospho-L-threonyl-[pyruvate, phosphate dikinase] + phosphate + H(+) = N(tele)-phospho-L-histidyl/L-threonyl-[pyruvate, phosphate dikinase] + diphosphate. Bifunctional serine/threonine kinase and phosphorylase involved in the regulation of the pyruvate, phosphate dikinase (PPDK) by catalyzing its phosphorylation/dephosphorylation. This is Putative pyruvate, phosphate dikinase regulatory protein from Rickettsia typhi (strain ATCC VR-144 / Wilmington).